Consider the following 279-residue polypeptide: Ribosomal RNA large subunit methyltransferase E (279 aa).

Basic and acidic residues predominate over residues 1–10 (MSDDDQKPED). The disordered stretch occupies residues 1–66 (MSDDDQKPED…MKKGGDARAA (66 aa)). S-adenosyl-L-methionine is bound by residues glycine 136, tryptophan 138, aspartate 154, aspartate 170, and aspartate 194. Lysine 234 serves as the catalytic Proton acceptor.

It belongs to the class I-like SAM-binding methyltransferase superfamily. RNA methyltransferase RlmE family.

It is found in the cytoplasm. It carries out the reaction uridine(2552) in 23S rRNA + S-adenosyl-L-methionine = 2'-O-methyluridine(2552) in 23S rRNA + S-adenosyl-L-homocysteine + H(+). Specifically methylates the uridine in position 2552 of 23S rRNA at the 2'-O position of the ribose in the fully assembled 50S ribosomal subunit. This Maricaulis maris (strain MCS10) (Caulobacter maris) protein is Ribosomal RNA large subunit methyltransferase E.